The following is a 155-amino-acid chain: Rhombotin-1 (155 aa).

LIM zinc-binding domains lie at lysine 21 to threonine 83 and glycine 85 to asparagine 147.

It localises to the nucleus. May be involved in gene regulation within neural lineage cells potentially by direct DNA binding or by binding to other transcription factors. The sequence is that of Rhombotin-1 from Danio rerio (Zebrafish).